A 499-amino-acid chain; its full sequence is Low-affinity inorganic phosphate transporter PitA (499 aa).

At 1–4 the chain is on the periplasmic side; that stretch reads MLHL. Residues 5–25 form a helical membrane-spanning segment; sequence FAGLDLHTGLLLLLALAFVLF. At 26–51 the chain is on the cytoplasmic side; that stretch reads YEAINGFHDTANAVATVIYTRAMRSQ. Residues 52-72 form a helical membrane-spanning segment; it reads LAVVMAAVFNFLGVLLGGLSV. Topologically, residues 73 to 93 are periplasmic; sequence AYAIVHMLPTDLLLNMGSSHG. Residues 94–114 form a helical membrane-spanning segment; the sequence is LAMVFSMLLAAIIWNLGTWYF. The Cytoplasmic segment spans residues 115–123; sequence GLPASSSHT. The helical transmembrane segment at 124-144 threads the bilayer; the sequence is LIGAIIGIGLTNALMTGTSVV. The Periplasmic segment spans residues 145–154; the sequence is DALNIPKVLS. Residues 155–175 form a helical membrane-spanning segment; it reads IFGSLIVSPIVGLVFAGGLIF. Topologically, residues 176-206 are cytoplasmic; it reads LLRRYWSGTKKRARIHLTPAEREKKDGKKKP. Residues 207-227 traverse the membrane as a helical segment; the sequence is PFWTRIALILSAIGVAFSHGA. Topologically, residues 228-232 are periplasmic; the sequence is NDGQK. Residues 233-253 traverse the membrane as a helical segment; that stretch reads GIGLVMLVLIGVAPAGFVVNM. Over 254–381 the chain is Cytoplasmic; the sequence is NATGYEITRT…KSDMLSTIEY (128 aa). A helical membrane pass occupies residues 382–402; it reads APVWIIMAVALALGIGTMIGW. At 403 to 429 the chain is on the periplasmic side; it reads RRVATTIGEKIGKKGMTYAQGMSAQMT. A helical membrane pass occupies residues 430 to 450; the sequence is AAVSIGLASYTGMPVSTTHVL. The Cytoplasmic portion of the chain corresponds to 451–472; the sequence is SSSVAGTMVVDGGGLQRKTVTS. The helical transmembrane segment at 473–493 threads the bilayer; that stretch reads ILMAWVFTLPAAVLLSGGLYW. Over 494 to 499 the chain is Periplasmic; sequence LSLQFL.

This sequence belongs to the inorganic phosphate transporter (PiT) (TC 2.A.20) family. Pit subfamily.

The protein localises to the cell inner membrane. It carries out the reaction phosphate(in) + H(+)(in) = phosphate(out) + H(+)(out). Its function is as follows. Low-affinity inorganic phosphate transporter. This Escherichia coli O157:H7 protein is Low-affinity inorganic phosphate transporter PitA (pitA).